The primary structure comprises 119 residues: Phosphoribosyl-AMP cyclohydrolase (119 aa).

D77 is a binding site for Mg(2+). C78 is a binding site for Zn(2+). D79 and D81 together coordinate Mg(2+). Residues C94 and C101 each coordinate Zn(2+).

The protein belongs to the PRA-CH family. Homodimer. Mg(2+) serves as cofactor. Zn(2+) is required as a cofactor.

The protein resides in the cytoplasm. The catalysed reaction is 1-(5-phospho-beta-D-ribosyl)-5'-AMP + H2O = 1-(5-phospho-beta-D-ribosyl)-5-[(5-phospho-beta-D-ribosylamino)methylideneamino]imidazole-4-carboxamide. It participates in amino-acid biosynthesis; L-histidine biosynthesis; L-histidine from 5-phospho-alpha-D-ribose 1-diphosphate: step 3/9. Functionally, catalyzes the hydrolysis of the adenine ring of phosphoribosyl-AMP. The protein is Phosphoribosyl-AMP cyclohydrolase of Cereibacter sphaeroides (strain ATCC 17023 / DSM 158 / JCM 6121 / CCUG 31486 / LMG 2827 / NBRC 12203 / NCIMB 8253 / ATH 2.4.1.) (Rhodobacter sphaeroides).